Consider the following 185-residue polypeptide: MRSKRTRVNNQIRVPEVRLIDEKGEQVGVVRTDRALTMAEEAGLDLVEISPTAKPPVCRIMNFGKYQFEQSKRKAAQKKKQRLVHLKEVKFRPGTDVGDYQVKLRKIATFLDRGDKVKVSLRFRGREMQHRELGLELLGRVKRDLGNIVVEQEPRLEGRQMTMVVMKAKGEGNKTKREDHAEIKD.

It belongs to the IF-3 family. As to quaternary structure, monomer.

The protein localises to the cytoplasm. In terms of biological role, IF-3 binds to the 30S ribosomal subunit and shifts the equilibrium between 70S ribosomes and their 50S and 30S subunits in favor of the free subunits, thus enhancing the availability of 30S subunits on which protein synthesis initiation begins. The sequence is that of Translation initiation factor IF-3 from Coxiella burnetii (strain RSA 493 / Nine Mile phase I).